Reading from the N-terminus, the 125-residue chain is SOSS complex subunit C homolog B (125 aa).

2 disordered regions span residues 44–73 and 105–125; these read PAPQ…RAAF and PATP…NNPK.

Belongs to the SOSS-C family.

This Drosophila willistoni (Fruit fly) protein is SOSS complex subunit C homolog B.